The primary structure comprises 294 residues: Store-operated calcium entry regulator STIMATE (294 aa).

A disordered region spans residues 1–22; that stretch reads MQGPAGNASRGLPGGPPSTVAS. Topologically, residues 1 to 28 are cytoplasmic; that stretch reads MQGPAGNASRGLPGGPPSTVASGAGRCE. A run of 3 helical transmembrane segments spans residues 29–49, 69–89, and 102–122; these read SGAL…VVAF, IWFL…FANV, and LYLI…YVGV. Residues 149–153 carry the GXXXG motif motif; that stretch reads GAWVG. Helical transmembrane passes span 156 to 176 and 194 to 214; these read ALYI…LLIL and LAIV…WVVD. The Cytoplasmic segment spans residues 215–294; it reads NFLMRKGKTK…KKKHRFGLPV (80 aa). Residues 227-268 are disordered; it reads LEERGANQDSRNGSKVRYRRAASHEESESEILISADDEMEES. Residues 241–246 form a required for localization in the endoplasmic reticulum region; it reads KVRYRR.

It belongs to the STIMATE family. As to quaternary structure, homooligomer. Interacts with STIM1. Widely expressed.

The protein resides in the endoplasmic reticulum membrane. Functionally, acts as a regulator of store-operated Ca(2+) entry (SOCE) at junctional sites that connect the endoplasmic reticulum (ER) and plasma membrane (PM), called ER-plasma membrane (ER-PM) junction or cortical ER. SOCE is a Ca(2+) influx following depletion of intracellular Ca(2+) stores. Acts by interacting with STIM1, promoting STIM1 conformational switch. Involved in STIM1 relocalization to ER-PM junctions. Contributes to the maintenance and reorganization of store-dependent ER-PM junctions. The protein is Store-operated calcium entry regulator STIMATE of Homo sapiens (Human).